Consider the following 245-residue polypeptide: uncharacterized protein (245 aa).

Positions Lys-162–Arg-174 are enriched in basic and acidic residues. Residues Lys-162–Thr-183 are disordered.

This is an uncharacterized protein from Homo sapiens (Human).